The primary structure comprises 1442 residues: ABC transporter G family member 11 (1442 aa).

Residues 125 to 373 enclose the ABC transporter 1 domain; that stretch reads LFTPSFWTKK…FMSLGFDCEP (249 aa). An ABC transmembrane type-2 1 domain is found at 478–718; that stretch reads LNDKFGMYSK…EQGSLYFKGD (241 aa). 6 helical membrane passes run 482–502, 518–538, 567–587, 592–612, 627–647, and 737–757; these read FGMY…ASLF, AILS…AMTF, IPFT…MFGL, GKFF…TALF, NISN…IPIP, and IIVY…MEYI. The ABC transporter 2 domain occupies 808-1052; that stretch reads FTWQNIRYTV…LTSYFERHGV (245 aa). 844-851 contacts ATP; sequence GSSGAGKT. The ABC transmembrane type-2 2 domain occupies 1144 to 1369; it reads YYTYGSFVQA…YNTCQNYTSA (226 aa). 6 consecutive transmembrane segments (helical) span residues 1147–1167, 1181–1201, 1220–1240, 1259–1279, 1286–1306, and 1416–1436; these read YGSF…FWNL, IFEA…QLII, FAIS…TIFF, FYFW…GQAV, MFFA…FCGV, and VGII…FVYL.

Belongs to the ABC transporter superfamily. ABCG family. PDR (TC 3.A.1.205) subfamily.

It localises to the membrane. The protein is ABC transporter G family member 11 (abcG11) of Dictyostelium discoideum (Social amoeba).